Here is a 376-residue protein sequence, read N- to C-terminus: tRNA-specific 2-thiouridylase MnmA (376 aa).

Residues Gly10–Ser17 and Met36 contribute to the ATP site. Residues Asn96 to Asp98 are interaction with target base in tRNA. Cys101 serves as the catalytic Nucleophile. An intrachain disulfide couples Cys101 to Cys198. Gly125 contacts ATP. An interaction with tRNA region spans residues Lys148–Gln150. The active-site Cysteine persulfide intermediate is the Cys198. The segment at Arg305–Tyr306 is interaction with tRNA.

It belongs to the MnmA/TRMU family.

The protein resides in the cytoplasm. The enzyme catalyses S-sulfanyl-L-cysteinyl-[protein] + uridine(34) in tRNA + AH2 + ATP = 2-thiouridine(34) in tRNA + L-cysteinyl-[protein] + A + AMP + diphosphate + H(+). In terms of biological role, catalyzes the 2-thiolation of uridine at the wobble position (U34) of tRNA, leading to the formation of s(2)U34. The protein is tRNA-specific 2-thiouridylase MnmA of Protochlamydia amoebophila (strain UWE25).